Consider the following 639-residue polypeptide: tRNA uridine 5-carboxymethylaminomethyl modification enzyme MnmG (639 aa).

15-20 (GAGHAG) contributes to the FAD binding site. 276–290 (GPRYCPSIEDKIVRF) is an NAD(+) binding site.

The protein belongs to the MnmG family. As to quaternary structure, homodimer. Heterotetramer of two MnmE and two MnmG subunits. FAD serves as cofactor.

The protein localises to the cytoplasm. In terms of biological role, NAD-binding protein involved in the addition of a carboxymethylaminomethyl (cmnm) group at the wobble position (U34) of certain tRNAs, forming tRNA-cmnm(5)s(2)U34. The chain is tRNA uridine 5-carboxymethylaminomethyl modification enzyme MnmG from Streptococcus gordonii (strain Challis / ATCC 35105 / BCRC 15272 / CH1 / DL1 / V288).